The following is a 75-amino-acid chain: ATP synthase subunit c (75 aa).

Helical transmembrane passes span 13 to 33 and 55 to 75; these read LSVI…GILF and FIGL…ALII.

The protein belongs to the ATPase C chain family. F-type ATPases have 2 components, F(1) - the catalytic core - and F(0) - the membrane proton channel. F(1) has five subunits: alpha(3), beta(3), gamma(1), delta(1), epsilon(1). F(0) has three main subunits: a(1), b(2) and c(10-14). The alpha and beta chains form an alternating ring which encloses part of the gamma chain. F(1) is attached to F(0) by a central stalk formed by the gamma and epsilon chains, while a peripheral stalk is formed by the delta and b chains.

The protein localises to the cell membrane. Functionally, f(1)F(0) ATP synthase produces ATP from ADP in the presence of a proton or sodium gradient. F-type ATPases consist of two structural domains, F(1) containing the extramembraneous catalytic core and F(0) containing the membrane proton channel, linked together by a central stalk and a peripheral stalk. During catalysis, ATP synthesis in the catalytic domain of F(1) is coupled via a rotary mechanism of the central stalk subunits to proton translocation. Its function is as follows. Key component of the F(0) channel; it plays a direct role in translocation across the membrane. A homomeric c-ring of between 10-14 subunits forms the central stalk rotor element with the F(1) delta and epsilon subunits. The sequence is that of ATP synthase subunit c from Bifidobacterium longum (strain DJO10A).